We begin with the raw amino-acid sequence, 135 residues long: Putative hydrolase EbsB (135 aa).

In terms of domain architecture, RNase H type-1 spans 1 to 128 (MLRIYVDAAT…ADMLARQALQ (128 aa)). Residues aspartate 7, glutamate 45, aspartate 71, and aspartate 120 each contribute to the Mg(2+) site.

The protein belongs to the RNase H family. EbsB subfamily. Mg(2+) is required as a cofactor.

It localises to the secreted. Its subcellular location is the cell wall. Functionally, seems to play some role in the cell surface expression of a chromosomally encoded receptor, named enterococcal binding substance (EBS), that mediates mating aggregate formation. Might interfere with the synthesis or assembly of EBS and function as a cell wall hydrolase. The chain is Putative hydrolase EbsB from Enterococcus faecalis (strain ATCC 700802 / V583).